Consider the following 410-residue polypeptide: Phosphoglycerate kinase (410 aa).

Substrate contacts are provided by residues 19–21 (DLN), Arg-34, 57–60 (HQGK), Arg-114, and Arg-154. ATP is bound by residues Glu-332 and 358–361 (GGHS).

This sequence belongs to the phosphoglycerate kinase family. In terms of assembly, homodimer.

The protein localises to the cytoplasm. It carries out the reaction (2R)-3-phosphoglycerate + ATP = (2R)-3-phospho-glyceroyl phosphate + ADP. It functions in the pathway carbohydrate degradation; glycolysis; pyruvate from D-glyceraldehyde 3-phosphate: step 2/5. The protein is Phosphoglycerate kinase (pgk) of Pyrococcus furiosus (strain ATCC 43587 / DSM 3638 / JCM 8422 / Vc1).